A 122-amino-acid polypeptide reads, in one-letter code: MGNKDLTVIKRKALRRGRMSEYVAAAFLMLKGYRILALRHRTRLGEIDIVARKGDLTIFVEVKARHGEAAAIDAVSVAAQKRIRAASDLWLARQADQARLSQRYDIIAVMPGRLPRHFPDAF.

This sequence belongs to the UPF0102 family.

In Rhizobium etli (strain ATCC 51251 / DSM 11541 / JCM 21823 / NBRC 15573 / CFN 42), this protein is UPF0102 protein RHE_CH00320.